Here is a 210-residue protein sequence, read N- to C-terminus: Large ribosomal subunit protein uL4 (210 aa).

The protein belongs to the universal ribosomal protein uL4 family. Part of the 50S ribosomal subunit.

One of the primary rRNA binding proteins, this protein initially binds near the 5'-end of the 23S rRNA. It is important during the early stages of 50S assembly. It makes multiple contacts with different domains of the 23S rRNA in the assembled 50S subunit and ribosome. Its function is as follows. Forms part of the polypeptide exit tunnel. In Orientia tsutsugamushi (strain Boryong) (Rickettsia tsutsugamushi), this protein is Large ribosomal subunit protein uL4.